The chain runs to 160 residues: Cyclic pyranopterin monophosphate synthase (160 aa).

Residues 75 to 77 (MCH) and 115 to 116 (ME) each bind substrate. The active site involves Asp-130.

It belongs to the MoaC family. As to quaternary structure, homohexamer; trimer of dimers.

The enzyme catalyses (8S)-3',8-cyclo-7,8-dihydroguanosine 5'-triphosphate = cyclic pyranopterin phosphate + diphosphate. Its pathway is cofactor biosynthesis; molybdopterin biosynthesis. Functionally, catalyzes the conversion of (8S)-3',8-cyclo-7,8-dihydroguanosine 5'-triphosphate to cyclic pyranopterin monophosphate (cPMP). In Lysinibacillus sphaericus (strain C3-41), this protein is Cyclic pyranopterin monophosphate synthase.